The following is an 880-amino-acid chain: Lon protease (880 aa).

The segment at Met-1–His-37 is disordered. A compositionally biased stretch (basic and acidic residues) spans Glu-27–His-37. One can recognise a Lon N-terminal domain in the interval Leu-57–Val-251. Residue Gly-404 to Thr-411 coordinates ATP. The 182-residue stretch at Lys-640 to Gly-821 folds into the Lon proteolytic domain. Catalysis depends on residues Ser-727 and Lys-770. The span at Gly-826–Asp-836 shows a compositional bias: gly residues. The disordered stretch occupies residues Gly-826 to Ala-880. Positions Ala-852–Pro-861 are enriched in low complexity.

Belongs to the peptidase S16 family. In terms of assembly, homohexamer. Organized in a ring with a central cavity.

The protein resides in the cytoplasm. It catalyses the reaction Hydrolysis of proteins in presence of ATP.. In terms of biological role, ATP-dependent serine protease that mediates the selective degradation of mutant and abnormal proteins as well as certain short-lived regulatory proteins. Required for cellular homeostasis and for survival from DNA damage and developmental changes induced by stress. Degrades polypeptides processively to yield small peptide fragments that are 5 to 10 amino acids long. Binds to DNA in a double-stranded, site-specific manner. This is Lon protease from Desulfovibrio desulfuricans (strain ATCC 27774 / DSM 6949 / MB).